Consider the following 437-residue polypeptide: GTPase Obg (437 aa).

The Obg domain occupies 2-160; it reads SLFLDTARIE…KILLLELRVL (159 aa). The OBG-type G domain maps to 161-338; sequence ADVGLVGFPS…LLARTSELLA (178 aa). Residues 167-174, 192-196, 214-217, 284-287, and 319-321 each bind GTP; these read GFPSVGKS, FTTIT, DMPG, NKMD, and SGL. Mg(2+)-binding residues include S174 and T194. In terms of domain architecture, OCT spans 359 to 437; it reads GFEDEEKPFK…IQKFEFEFVD (79 aa).

It belongs to the TRAFAC class OBG-HflX-like GTPase superfamily. OBG GTPase family. As to quaternary structure, monomer. Mg(2+) serves as cofactor.

The protein resides in the cytoplasm. Functionally, an essential GTPase which binds GTP, GDP and possibly (p)ppGpp with moderate affinity, with high nucleotide exchange rates and a fairly low GTP hydrolysis rate. Plays a role in control of the cell cycle, stress response, ribosome biogenesis and in those bacteria that undergo differentiation, in morphogenesis control. The chain is GTPase Obg from Lactococcus lactis subsp. cremoris (strain SK11).